A 357-amino-acid polypeptide reads, in one-letter code: tRNA/tmRNA (uracil-C(5))-methyltransferase (357 aa).

S-adenosyl-L-methionine-binding residues include Q180, Y209, N214, E230, and D290. The active-site Nucleophile is the C315. E349 functions as the Proton acceptor in the catalytic mechanism.

It belongs to the class I-like SAM-binding methyltransferase superfamily. RNA M5U methyltransferase family. TrmA subfamily.

It catalyses the reaction uridine(54) in tRNA + S-adenosyl-L-methionine = 5-methyluridine(54) in tRNA + S-adenosyl-L-homocysteine + H(+). The catalysed reaction is uridine(341) in tmRNA + S-adenosyl-L-methionine = 5-methyluridine(341) in tmRNA + S-adenosyl-L-homocysteine + H(+). Functionally, dual-specificity methyltransferase that catalyzes the formation of 5-methyluridine at position 54 (m5U54) in all tRNAs, and that of position 341 (m5U341) in tmRNA (transfer-mRNA). The polypeptide is tRNA/tmRNA (uracil-C(5))-methyltransferase (Campylobacter jejuni subsp. jejuni serotype O:23/36 (strain 81-176)).